The sequence spans 251 residues: Hydroxyacylglutathione hydrolase (251 aa).

Zn(2+) is bound by residues His53, His55, Asp57, His58, His110, Asp127, and His165.

The protein belongs to the metallo-beta-lactamase superfamily. Glyoxalase II family. Monomer. The cofactor is Zn(2+).

The catalysed reaction is an S-(2-hydroxyacyl)glutathione + H2O = a 2-hydroxy carboxylate + glutathione + H(+). The protein operates within secondary metabolite metabolism; methylglyoxal degradation; (R)-lactate from methylglyoxal: step 2/2. Its function is as follows. Thiolesterase that catalyzes the hydrolysis of S-D-lactoyl-glutathione to form glutathione and D-lactic acid. This chain is Hydroxyacylglutathione hydrolase, found in Escherichia coli (strain ATCC 8739 / DSM 1576 / NBRC 3972 / NCIMB 8545 / WDCM 00012 / Crooks).